The sequence spans 336 residues: Ornithine carbamoyltransferase, catabolic (336 aa).

Carbamoyl phosphate is bound by residues serine 57 to threonine 60, glutamine 84, arginine 108, and histidine 136 to glutamine 139. L-ornithine contacts are provided by residues asparagine 169, aspartate 233, and serine 237–methionine 238. Residues cysteine 275–leucine 276 and arginine 322 contribute to the carbamoyl phosphate site.

It belongs to the aspartate/ornithine carbamoyltransferase superfamily. OTCase family.

The protein resides in the cytoplasm. It carries out the reaction carbamoyl phosphate + L-ornithine = L-citrulline + phosphate + H(+). The protein operates within amino-acid degradation; L-arginine degradation via ADI pathway; carbamoyl phosphate from L-arginine: step 2/2. Functionally, reversibly catalyzes the transfer of the carbamoyl group from carbamoyl phosphate (CP) to the N(epsilon) atom of ornithine (ORN) to produce L-citrulline. This is Ornithine carbamoyltransferase, catabolic from Chromobacterium violaceum (strain ATCC 12472 / DSM 30191 / JCM 1249 / CCUG 213 / NBRC 12614 / NCIMB 9131 / NCTC 9757 / MK).